Here is a 496-residue protein sequence, read N- to C-terminus: Alanine aminotransferase 1 (496 aa).

Ala-2 is subject to N-acetylalanine. A Phosphothreonine modification is found at Thr-22. Lys-314 carries the post-translational modification N6-(pyridoxal phosphate)lysine.

The protein belongs to the class-I pyridoxal-phosphate-dependent aminotransferase family. Alanine aminotransferase subfamily. As to quaternary structure, homodimer. Pyridoxal 5'-phosphate is required as a cofactor. Liver, kidney, heart, and skeletal muscles. Expressed at moderate levels in the adipose tissue.

It is found in the cytoplasm. It catalyses the reaction L-alanine + 2-oxoglutarate = pyruvate + L-glutamate. It participates in amino-acid degradation; L-alanine degradation via transaminase pathway; pyruvate from L-alanine: step 1/1. In terms of biological role, catalyzes the reversible transamination between alanine and 2-oxoglutarate to form pyruvate and glutamate. Participates in cellular nitrogen metabolism and also in liver gluconeogenesis starting with precursors transported from skeletal muscles. The protein is Alanine aminotransferase 1 (GPT) of Homo sapiens (Human).